A 116-amino-acid chain; its full sequence is Peptidyl-tRNA hydrolase (116 aa).

This sequence belongs to the PTH2 family.

It is found in the cytoplasm. The enzyme catalyses an N-acyl-L-alpha-aminoacyl-tRNA + H2O = an N-acyl-L-amino acid + a tRNA + H(+). Its function is as follows. The natural substrate for this enzyme may be peptidyl-tRNAs which drop off the ribosome during protein synthesis. The chain is Peptidyl-tRNA hydrolase (pth) from Methanococcus maripaludis (strain DSM 14266 / JCM 13030 / NBRC 101832 / S2 / LL).